The following is a 729-amino-acid chain: Phosphoribosylformylglycinamidine synthase subunit PurL (729 aa).

His42 is an active-site residue. ATP-binding residues include Tyr45 and Lys84. Position 86 (Glu86) interacts with Mg(2+). Substrate is bound by residues 87–90 (SHNH) and Arg109. Residue His88 is the Proton acceptor of the active site. Asp110 contacts Mg(2+). Gln238 lines the substrate pocket. Asp266 provides a ligand contact to Mg(2+). Residue 310 to 312 (ESQ) coordinates substrate. The ATP site is built by Asp492 and Gly529. Mg(2+) is bound at residue Asn530. Ser532 lines the substrate pocket.

The protein belongs to the FGAMS family. In terms of assembly, monomer. Part of the FGAM synthase complex composed of 1 PurL, 1 PurQ and 2 PurS subunits.

The protein resides in the cytoplasm. The catalysed reaction is N(2)-formyl-N(1)-(5-phospho-beta-D-ribosyl)glycinamide + L-glutamine + ATP + H2O = 2-formamido-N(1)-(5-O-phospho-beta-D-ribosyl)acetamidine + L-glutamate + ADP + phosphate + H(+). The protein operates within purine metabolism; IMP biosynthesis via de novo pathway; 5-amino-1-(5-phospho-D-ribosyl)imidazole from N(2)-formyl-N(1)-(5-phospho-D-ribosyl)glycinamide: step 1/2. Its function is as follows. Part of the phosphoribosylformylglycinamidine synthase complex involved in the purines biosynthetic pathway. Catalyzes the ATP-dependent conversion of formylglycinamide ribonucleotide (FGAR) and glutamine to yield formylglycinamidine ribonucleotide (FGAM) and glutamate. The FGAM synthase complex is composed of three subunits. PurQ produces an ammonia molecule by converting glutamine to glutamate. PurL transfers the ammonia molecule to FGAR to form FGAM in an ATP-dependent manner. PurS interacts with PurQ and PurL and is thought to assist in the transfer of the ammonia molecule from PurQ to PurL. This is Phosphoribosylformylglycinamidine synthase subunit PurL from Campylobacter concisus (strain 13826).